The primary structure comprises 567 residues: DNA ligase B (567 aa).

K132 serves as the catalytic N6-AMP-lysine intermediate.

The protein belongs to the NAD-dependent DNA ligase family. LigB subfamily.

The enzyme catalyses NAD(+) + (deoxyribonucleotide)n-3'-hydroxyl + 5'-phospho-(deoxyribonucleotide)m = (deoxyribonucleotide)n+m + AMP + beta-nicotinamide D-nucleotide.. Catalyzes the formation of phosphodiester linkages between 5'-phosphoryl and 3'-hydroxyl groups in double-stranded DNA using NAD as a coenzyme and as the energy source for the reaction. This chain is DNA ligase B, found in Yersinia pestis bv. Antiqua (strain Angola).